A 304-amino-acid chain; its full sequence is MGQCVTKCKNPSSTLGSKNGDRDPSSKSHSRRGASHREEQVPPCGKPAGDILVNGTKKAEAATEACQLPTSSGDAGRESKTNAEESSLQRLEELFRRYKDEREDAILEEGMERFCNDLCVDPTEFRVLLLAWKFQAATMCKFTRKEFFDGCKAISADSIDGICARFPSLLTEAKQEDKFKDLYRFTFQFGLDSEEGQRSLHREIAIALWKLVFTQNNPPVLDQWLNFLTENPSGIKGISRDTWNMFLNFTQVIGPDLSNYSEDEAWPSLFDTFVEWEMERRKREVEGRGALSSGPEGLCPEEQT.

Disordered stretches follow at residues M1 to S87 and V285 to T304. The N-myristoyl glycine moiety is linked to residue G2. A DCUN1 domain is found at S86–M278.

As to quaternary structure, part of a complex containing DCUN1D3, CUL3 and RBX1. Interacts (via the DCUN1 domain) with the unneddylated cullins: interacts with CUL1, CUL2, CUL3, CUL4A, CUL4B and CUL5; these interactions promote the cullin neddylation and the identity of the cullin dictates the affinity of the interaction. Interacts preferentially with CUL3; this interaction triggers the relocalization of CUL3 to the cell membrane where CUL3 is neddylated. Interacts (via DCUN1 domain) with RBX1. May also interact with regulators or subunits of cullin-RING ligases such as RNF7, ELOB and DDB1; these interactions are bridged by cullins. Interacts (via DCUN1 domain) with CAND1; this interaction is bridged by cullins and strongly inhibits cullin neddylation. These CAND-cullin-DCNL complexes can only be neddylated in the presence of a substrate adapter. Interacts (via DCUN1 domain) with the N-terminally acetylated form of UBE2M and UBE2F.

Its subcellular location is the cell membrane. The protein localises to the cytoplasm. The protein resides in the nucleus. It is found in the perinuclear region. Contributes to the neddylation of all cullins by transferring NEDD8 from N-terminally acetylated NEDD8-conjugating E2s enzyme to different cullin C-terminal domain-RBX complexes and may play a role in the cell cycle progression by regulating the SCF ubiquitin E3 ligase complex, after UV damage. At the cell membrane, can promote and as well inhibit cullins neddylation. This is DCN1-like protein 3 from Rattus norvegicus (Rat).